We begin with the raw amino-acid sequence, 414 residues long: Esterase FrsA (414 aa).

It belongs to the FrsA family.

The catalysed reaction is a carboxylic ester + H2O = an alcohol + a carboxylate + H(+). Its function is as follows. Catalyzes the hydrolysis of esters. The polypeptide is Esterase FrsA (Shigella dysenteriae serotype 1 (strain Sd197)).